We begin with the raw amino-acid sequence, 343 residues long: L-threonine 3-dehydrogenase (343 aa).

Cysteine 38 contacts Zn(2+). Active-site charge relay system residues include threonine 40 and histidine 43. Zn(2+) is bound by residues histidine 63, glutamate 64, cysteine 93, cysteine 96, cysteine 99, and cysteine 107. NAD(+) is bound by residues isoleucine 176, aspartate 196, arginine 201, 261–263 (LGI), and 286–288 (IAG).

It belongs to the zinc-containing alcohol dehydrogenase family. As to quaternary structure, homotetramer. Requires Zn(2+) as cofactor.

The protein localises to the cytoplasm. It catalyses the reaction L-threonine + NAD(+) = (2S)-2-amino-3-oxobutanoate + NADH + H(+). It participates in amino-acid degradation; L-threonine degradation via oxydo-reductase pathway; glycine from L-threonine: step 1/2. In terms of biological role, catalyzes the NAD(+)-dependent oxidation of L-threonine to 2-amino-3-ketobutyrate. The polypeptide is L-threonine 3-dehydrogenase (Thermus thermophilus (strain ATCC 27634 / DSM 579 / HB8)).